Reading from the N-terminus, the 374-residue chain is Putative F-box protein At3g16590 (374 aa).

The 45-residue stretch at 1–45 (MPTKLPLELEDEILLRVPPLSLTRFRTVCKRWNTLFNDQRFINNH) folds into the F-box domain.

The chain is Putative F-box protein At3g16590 from Arabidopsis thaliana (Mouse-ear cress).